The following is a 510-amino-acid chain: NAD(P)H-quinone oxidoreductase subunit 2 A, chloroplastic (510 aa).

Transmembrane regions (helical) follow at residues 31-51 (LIFP…IDLT), 57-77 (IPWL…ALLF), 99-119 (IFQF…VEYI), 124-144 (MAIT…MFLC), 149-169 (LITI…LSGY), 184-204 (LLMG…LYGL), 229-249 (ISIA…LAPF), 261-281 (PTPV…ALAT), 295-315 (WHLL…LIAI), 323-343 (MLAY…IVGD), 354-374 (YMLF…LFGL), 395-415 (ALSL…AGFF), 418-438 (LYLF…IGLL), and 484-504 (MIVC…IIAI).

Belongs to the complex I subunit 2 family. NDH is composed of at least 16 different subunits, 5 of which are encoded in the nucleus.

It is found in the plastid. Its subcellular location is the chloroplast thylakoid membrane. The catalysed reaction is a plastoquinone + NADH + (n+1) H(+)(in) = a plastoquinol + NAD(+) + n H(+)(out). The enzyme catalyses a plastoquinone + NADPH + (n+1) H(+)(in) = a plastoquinol + NADP(+) + n H(+)(out). NDH shuttles electrons from NAD(P)H:plastoquinone, via FMN and iron-sulfur (Fe-S) centers, to quinones in the photosynthetic chain and possibly in a chloroplast respiratory chain. The immediate electron acceptor for the enzyme in this species is believed to be plastoquinone. Couples the redox reaction to proton translocation, and thus conserves the redox energy in a proton gradient. The polypeptide is NAD(P)H-quinone oxidoreductase subunit 2 A, chloroplastic (Nicotiana tabacum (Common tobacco)).